We begin with the raw amino-acid sequence, 338 residues long: Dodecaprenyl-phosphate galacturonate synthase (338 aa).

2 consecutive transmembrane segments (helical) span residues 254-274 and 289-309; these read FFGS…LYLG and MLMV…TGIL.

It belongs to the glycosyltransferase 2 family.

It localises to the cell membrane. It carries out the reaction di-trans,nona-cis-dodecaprenyl phosphate + UDP-alpha-D-galacturonate = beta-D-galacturonosyl di-trans,nona-cis-dodecaprenyl phosphate + UDP. In terms of biological role, glycosyltransferase that catalyzes the synthesis of dodecaprenyl-phosphate galacturonate (Dod-P-GalA), likely from UDP-GalA and dodecaprenyl-phosphate. Dod-P-GalA is the lipid donor required for GalA transfer to lipopolysaccharide (LPS) specific residues catalyzed by the GalA transferases RgtA, RgtB, RgtC and RgtD. The chain is Dodecaprenyl-phosphate galacturonate synthase from Rhizobium johnstonii (strain DSM 114642 / LMG 32736 / 3841) (Rhizobium leguminosarum bv. viciae).